A 158-amino-acid chain; its full sequence is Protein EOLA2 (158 aa).

The ASCH domain occupies 6–92; the sequence is LSFRQPYAGF…IAGLVDIGET (87 aa).

This sequence belongs to the EOLA family.

The chain is Protein EOLA2 from Homo sapiens (Human).